Here is a 568-residue protein sequence, read N- to C-terminus: Proton-coupled zinc antiporter SLC30A9, mitochondrial (568 aa).

The N-terminal 67 residues, 1-67 (MLPGLAAAAA…IGTLSQVKLY (67 aa)), are a transit peptide targeting the mitochondrion. The next 5 helical transmembrane spans lie at 239 to 259 (VVMV…LAWI), 314 to 334 (GVGI…MGLL), 342 to 362 (LLWA…TLLV), 392 to 412 (VILL…TCMG), and 424 to 444 (SLGS…LIYT). The LXXLL motif motif lies at 462-466 (LTELL).

It belongs to the cation diffusion facilitator (CDF) transporter (TC 2.A.4) family. SLC30A subfamily. As to quaternary structure, interacts with GRIP1, ESR1 and AR. Ubiquitously expressed in fetal and adult tissues and cancer cell lines.

The protein localises to the mitochondrion membrane. It is found in the nucleus. It localises to the endoplasmic reticulum. It carries out the reaction Zn(2+)(in) + 2 H(+)(out) = Zn(2+)(out) + 2 H(+)(in). Functionally, mitochondrial proton-coupled zinc ion antiporter mediating the export of zinc from the mitochondria and involved in zinc homeostasis, zinc mobilization as well as mitochondrial morphology and health. In nucleus, functions as a secondary coactivator for nuclear receptors by cooperating with p160 coactivators subtypes. Plays a role in transcriptional activation of Wnt-responsive genes. This Homo sapiens (Human) protein is Proton-coupled zinc antiporter SLC30A9, mitochondrial.